Here is a 74-residue protein sequence, read N- to C-terminus: Ribosome modulation factor (74 aa).

It belongs to the ribosome modulation factor family.

The protein resides in the cytoplasm. During stationary phase, converts 70S ribosomes to an inactive dimeric form (100S ribosomes). The protein is Ribosome modulation factor of Cellvibrio japonicus (strain Ueda107) (Pseudomonas fluorescens subsp. cellulosa).